The sequence spans 414 residues: Probable elongation factor 1-gamma 1 (414 aa).

A GST N-terminal domain is found at 1 to 82 (MALVLHTYKG…YVSRLNGDNS (82 aa)). The 129-residue stretch at 87 to 215 (SLIEYAQIEQ…VKQTEAVPPI (129 aa)) folds into the GST C-terminal domain. Positions 214–224 (PIASKKAAQPA) are enriched in low complexity. The interval 214–260 (PIASKKAAQPAKPKEEPKKKEAPVAEAPKLAEEEEAPKPKAKNPLDL) is disordered. Basic and acidic residues predominate over residues 225 to 236 (KPKEEPKKKEAP). Residues 254–414 (AKNPLDLLPP…EALLDAKCFK (161 aa)) enclose the EF-1-gamma C-terminal domain.

EF-1 is composed of four subunits: alpha, beta, delta, and gamma.

In terms of biological role, probably plays a role in anchoring the complex to other cellular components. This Arabidopsis thaliana (Mouse-ear cress) protein is Probable elongation factor 1-gamma 1.